Here is a 654-residue protein sequence, read N- to C-terminus: Pentatricopeptide repeat-containing protein At5g61400 (654 aa).

PPR repeat units lie at residues 37–71 (SSFSSSSLAEAILKCRSAEEAFKLFETSSRSRVSK), 74–104 (DLQSFSAVIHVLTGAHKYTLARCLIKSLIER), 131–161 (SIGVFSLLIMEFLEMGLFEEALWVSREMKCS), 163–197 (DSKACLSILNGLVRRRRFDSVWVDYQLMISRGLVP), 198–232 (DVHIYFVLFQCCFKQGLYSKKEKLLDEMTSLGIKP), 233–267 (NVYIYTIYILDLCRDNKMEEAEKMFELMKKHGVLP), 268–302 (NLYTYSAMIDGYCKTGNVRQAYGLYKEILVAELLP), 303–337 (NVVVFGTLVDGFCKARELVTARSLFVHMVKFGVDP), 338–372 (NLYVYNCLIHGHCKSGNMLEAVGLLSEMESLNLSP), 373–407 (DVFTYTILINGLCIEDQVAEANRLFQKMKNERIFP), 408–442 (SSATYNSLIHGYCKEYNMEQALDLCSEMTASGVEP), 443–477 (NIITFSTLIDGYCNVRDIKAAMGLYFEMTIKGIVP), 478–512 (DVVTYTALIDAHFKEANMKEALRLYSDMLEAGIHP), 513–543 (NDHTFACLVDGFWKEGRLSVAIDFYQENNQQ), 548–582 (NHVGFTCLIEGLCQNGYILRASRFFSDMRSCGITP), and 583–617 (DICSYVSMLKGHLQEKRITDTMMLQCDMIKTGILP).

It belongs to the PPR family. P subfamily.

The sequence is that of Pentatricopeptide repeat-containing protein At5g61400 from Arabidopsis thaliana (Mouse-ear cress).